Reading from the N-terminus, the 90-residue chain is WAP four-disulfide core domain protein 12 (90 aa).

The N-terminal stretch at Met-1–Gly-23 is a signal peptide. The region spanning Gly-27–Val-74 is the WAP domain. 4 disulfide bridges follow: Cys-34–Cys-62, Cys-41–Cys-66, Cys-49–Cys-61, and Cys-55–Cys-70.

The protein localises to the secreted. Antibacterial protein. Putative acid-stable proteinase inhibitor. The chain is WAP four-disulfide core domain protein 12 (WFDC12) from Pongo abelii (Sumatran orangutan).